The sequence spans 287 residues: MSALSEILSYLIISFETSFTFHLEFKYKRTGIEKNESGVLVTVPRGKERQSSSEILDVFTQHIATLWPETQSSDQENEEEGEELEDAVAKEINSLQKKNKKELLTPIMLDMPCVYFVKTRPPIDPVRLVEFTCEVGKTKKMTRYTQRLIPIVRTTGVSLDDLEELAKSLIDPLFHEGQEGIKEFAVQANIRNHTVLKKDDIYRTVARIVGKQHMVDLKNFKLLILVQVIKNIIGISIVQNFEELRRFNLNEVYKQPENTKSIPNDSKLDNFDRDKNQIINDKAEHAE.

The 107-residue stretch at 133–239 (CEVGKTKKMT…KNIIGISIVQ (107 aa)) folds into the THUMP domain. A disordered region spans residues 257-287 (ENTKSIPNDSKLDNFDRDKNQIINDKAEHAE). A compositionally biased stretch (basic and acidic residues) spans 266-287 (SKLDNFDRDKNQIINDKAEHAE).

This is an uncharacterized protein from Schizosaccharomyces pombe (strain 972 / ATCC 24843) (Fission yeast).